A 568-amino-acid polypeptide reads, in one-letter code: Protein phosphatase 1 regulatory inhibitor subunit 16B (568 aa).

The stretch at 15–55 (EKVPTLERLRAAQKRRAQQLKKWAQYEQDLLHRKRKHERKR) forms a coiled coil. S69 bears the Phosphoserine mark. 4 ANK repeats span residues 100-129 (DGLT…NVNA), 133-162 (ELWT…DLLA), 228-257 (QGAT…RVDV), and 261-290 (DGWE…SLSA). Phosphoserine is present on residues S333, S337, and S350. The disordered stretch occupies residues 373-403 (SAAEDQRTSTYNGDIRETRTDQENKDPNPRL). Residues 386 to 403 (DIRETRTDQENKDPNPRL) show a composition bias toward basic and acidic residues. The residue at position 477 (S477) is a Phosphoserine. Residues 505–517 (SSVARSGESSSEG) show a composition bias toward low complexity. The tract at residues 505-527 (SSVARSGESSSEGKAPLIGGRTS) is disordered. One copy of the ANK 5 repeat lies at 531 to 560 (SNGTSVYYTVTSGDPPLLKFKAPMEEMEEK). C564 carries the S-palmitoyl cysteine lipid modification. A Cysteine methyl ester modification is found at C565. A lipid anchor (S-farnesyl cysteine) is attached at C565. Residues 566–568 (RIS) constitute a propeptide, removed in mature form.

In terms of assembly, interacts with PPP1CA, PPP1CB and MSN. Interacts (via its fourth ankyrin repeat) with the mature dimeric form of RPSA/LAMR1. Interacts with EEF1A1. Interacts with PTEN. Interacts with ECE1. Phosphorylated by PKA and, after PKA priming, by GSK3B. Phosphorylation by GSK3B reduces its association with PP1C and enhances PP1C activity. Dephosphorylation by its associated PP1C results in enhanced association with PP1C, but reduced PP1C activity.

The protein localises to the cell membrane. It is found in the nucleus. The protein resides in the cell projection. Functionally, regulator of protein phosphatase 1 (PP1) that acts as a positive regulator of pulmonary endothelial cell (EC) barrier function. Protects the endothelial barrier from lipopolysaccharide (LPS)-induced vascular leakage. Involved in the regulation of the PI3K/AKT signaling pathway. Involved in the regulation of angiogenesis and endothelial cell proliferation through the control of ECE1 dephosphorylation, trafficking and activity. Involved in the regulation of endothelial cell filopodia extension. May be a downstream target for TGF-beta1 signaling cascade in endothelial cells. Involved in PKA-mediated moesin dephosphorylation which is important in EC barrier protection against thrombin stimulation. Promotes the interaction of PPP1CA with RPSA/LAMR1 and in turn facilitates the dephosphorylation of RPSA/LAMR1. Involved in the dephosphorylation of EEF1A1. The sequence is that of Protein phosphatase 1 regulatory inhibitor subunit 16B (Ppp1r16b) from Mus musculus (Mouse).